A 474-amino-acid chain; its full sequence is Ribulose bisphosphate carboxylase large chain (474 aa).

Substrate contacts are provided by N123 and T173. K175 (proton acceptor) is an active-site residue. K177 is a binding site for substrate. Residues K201, D203, and E204 each coordinate Mg(2+). K201 is subject to N6-carboxylysine. The Proton acceptor role is filled by H293. Substrate is bound by residues R294, H326, and S378.

The protein belongs to the RuBisCO large chain family. Type I subfamily. Heterohexadecamer of 8 large chains and 8 small chains; disulfide-linked. The disulfide link is formed within the large subunit homodimers. Mg(2+) serves as cofactor. In terms of processing, the disulfide bond which can form in the large chain dimeric partners within the hexadecamer appears to be associated with oxidative stress and protein turnover.

It localises to the carboxysome. It catalyses the reaction 2 (2R)-3-phosphoglycerate + 2 H(+) = D-ribulose 1,5-bisphosphate + CO2 + H2O. The catalysed reaction is D-ribulose 1,5-bisphosphate + O2 = 2-phosphoglycolate + (2R)-3-phosphoglycerate + 2 H(+). In terms of biological role, ruBisCO catalyzes two reactions: the carboxylation of D-ribulose 1,5-bisphosphate, the primary event in carbon dioxide fixation, as well as the oxidative fragmentation of the pentose substrate in the photorespiration process. Both reactions occur simultaneously and in competition at the same active site. This chain is Ribulose bisphosphate carboxylase large chain, found in Synechococcus sp.